Here is a 407-residue protein sequence, read N- to C-terminus: Chorismate synthase (407 aa).

Residues Arg-40 and Arg-46 each contribute to the NADP(+) site. Residues 138 to 140 (RAS) and 259 to 260 (QA) contribute to the FMN site. The segment covering 275–284 (RRGSRAHDEM) has biased composition (basic and acidic residues). The disordered stretch occupies residues 275–308 (RRGSRAHDEMYPGTDGVVRSTNRAGGLEGGMTNG). Residues Gly-303, 318-322 (KPIST), and Arg-344 contribute to the FMN site.

The protein belongs to the chorismate synthase family. As to quaternary structure, homotetramer. FMNH2 serves as cofactor.

The catalysed reaction is 5-O-(1-carboxyvinyl)-3-phosphoshikimate = chorismate + phosphate. Its pathway is metabolic intermediate biosynthesis; chorismate biosynthesis; chorismate from D-erythrose 4-phosphate and phosphoenolpyruvate: step 7/7. In terms of biological role, catalyzes the anti-1,4-elimination of the C-3 phosphate and the C-6 proR hydrogen from 5-enolpyruvylshikimate-3-phosphate (EPSP) to yield chorismate, which is the branch point compound that serves as the starting substrate for the three terminal pathways of aromatic amino acid biosynthesis. This reaction introduces a second double bond into the aromatic ring system. This Mycobacterium ulcerans (strain Agy99) protein is Chorismate synthase.